The chain runs to 753 residues: A-kinase anchor protein 200 (753 aa).

Disordered stretches follow at residues 1–345 (MGKA…QIEA), 462–482 (VETRSSSPPPPLPKSPPPSRV), 531–604 (TEQE…IDPA), 620–641 (VEKETGSISSNVAESSSVSDEQ), and 658–684 (VEETTEQETSDQQVISEEAHSDNDKEN). G2 is lipidated: N-myristoyl glycine. 2 stretches are compositionally biased toward basic and acidic residues: residues 8-38 (RSIDITTDPKKVGEGDEVAGKVEKIDVDQKT) and 59-77 (AVEKKETEEHSENDKDLTT). Residues 81-93 (AAVAEGGDAVAET) are compositionally biased toward low complexity. The tract at residues 119–148 (KSKSKKDKVKKKWSFRSISFGKKDKQKPAK) is F-actin binding. A compositionally biased stretch (basic residues) spans 120–132 (SKSKKDKVKKKWS). 3 positions are modified to phosphoserine: S132, S135, and S137. The segment covering 139 to 151 (GKKDKQKPAKSEE) has biased composition (basic and acidic residues). Low complexity predominate over residues 152–181 (ATSPTSGTTSPTTAEAEAAPAGDAAVAEPS). A compositionally biased stretch (basic and acidic residues) spans 216 to 227 (EQEKQANGETEK). Over residues 246 to 262 (EPATVTATESNTTATEE) the composition is skewed to low complexity. Residues 345-725 (ASSEVIETVT…AEQEGESNNK (381 aa)) are interaction with PKA-R2. The segment covering 468 to 480 (SPPPPLPKSPPPS) has biased composition (pro residues). A compositionally biased stretch (basic and acidic residues) spans 532 to 544 (EQEKQQEEAKVDS). Positions 545-561 (VPETIEESSSTVVVEEV) are enriched in low complexity. The span at 578-594 (DVQKPIEDQDTPDEKES) shows a compositional bias: basic and acidic residues. Residues 626–638 (SISSNVAESSSVS) show a composition bias toward low complexity. The span at 674–684 (EEAHSDNDKEN) shows a compositional bias: basic and acidic residues.

In terms of assembly, homodimer. Interacts with Cam; interaction is calcium-dependent and is inhibited by PKC-mediated phosphorylation of Akap200. Interacts with N/Notch; the interaction stabilizes N/Notch protein levels by preventing Cbl-mediated ubiquitination and subsequent lysosomal degradation of N/Notch. Interacts with Pka-R2. Binds to F-actin; interaction is independent of myristoylation, but is inhibited by Akap200 phosphorylation and Cam binding. Isoform B: Does not bind to Pka-R2. Myristoylated; myristoylation promotes accumulation at the cell periphery. In terms of processing, phosphorylated; phosphorylation prevents binding to F-actin and Cam. In terms of tissue distribution, detected in the brain in both neurons and glia (including perineurial glia); specifically in the neuronal nuclei in the cortex and synaptic neuropil (at protein level). Detected in germline cells, somatic follicle cells and outer rim of the ring canals during oogenesis (at protein level). Isoform A: Detected in the adult (at protein level). Isoform B: Detected in the adult with higher levels in the head (at protein level).

The protein localises to the cytoplasm. Its subcellular location is the cytosol. It localises to the cell membrane. It is found in the cytoskeleton. Its function is as follows. Scaffolding protein involved in the regulation of PKA signaling and anchoring to the actin cytoskeleton integrating signals propagated by cAMP, diacylglycerol and calcium. Contributes to the maintenance and regulation of cytoskeletal structures in germline via PKA-mediated signaling. As part of ethanol response in the glia, mediates ethanol-induced structural remodeling of actin cytoskeleton and perineurial membrane topology by anchoring PKA to the membrane of perineurial glia. In specific tissues such as eye and thorax, promotes N/Notch protein stability by inhibiting Cbl-mediated ubiquitination and lysosomal degradation pathway of N/Notch in a PKA-independent way. In the circadian brain neurons evening cells (E-cells), might have a role in circadian pacemaker synchronization by playing a redundant role in signaling downstream of the G protein-couple receptor Pdfr. This Drosophila melanogaster (Fruit fly) protein is A-kinase anchor protein 200.